We begin with the raw amino-acid sequence, 211 residues long: MNKGIIGKKLGMTQIFLEDGTRVPVTVVQAGPCVVLQKKTAEVDGYSAVQVGFETVNAAKANSADRGHCVKAGKGVFRHLRELKLEQEAELNIGDELTVQQFEPGDLIDVTGTSIGKGFQGVIKRHNFKGGRASHGSRFHRAPGSIGCSATPSRVFKNKKMPGQMGNERVTVQRLQVVRVDADQNLILIKGAIPDSKNNVVVIKDSVKATK.

Belongs to the universal ribosomal protein uL3 family. In terms of assembly, part of the 50S ribosomal subunit. Forms a cluster with proteins L14 and L19.

Its function is as follows. One of the primary rRNA binding proteins, it binds directly near the 3'-end of the 23S rRNA, where it nucleates assembly of the 50S subunit. This Trichlorobacter lovleyi (strain ATCC BAA-1151 / DSM 17278 / SZ) (Geobacter lovleyi) protein is Large ribosomal subunit protein uL3.